A 322-amino-acid polypeptide reads, in one-letter code: 4-hydroxy-3-methylbut-2-enyl diphosphate reductase 1 (322 aa).

Residue cysteine 18 participates in [4Fe-4S] cluster binding. Positions 47 and 82 each coordinate (2E)-4-hydroxy-3-methylbut-2-enyl diphosphate. Dimethylallyl diphosphate is bound by residues histidine 47 and histidine 82. The isopentenyl diphosphate site is built by histidine 47 and histidine 82. Cysteine 104 provides a ligand contact to [4Fe-4S] cluster. Histidine 132 lines the (2E)-4-hydroxy-3-methylbut-2-enyl diphosphate pocket. Histidine 132 provides a ligand contact to dimethylallyl diphosphate. Position 132 (histidine 132) interacts with isopentenyl diphosphate. Glutamate 134 (proton donor) is an active-site residue. Threonine 173 contributes to the (2E)-4-hydroxy-3-methylbut-2-enyl diphosphate binding site. Residue cysteine 203 participates in [4Fe-4S] cluster binding. Residues serine 231, serine 232, asparagine 233, and serine 276 each contribute to the (2E)-4-hydroxy-3-methylbut-2-enyl diphosphate site. Dimethylallyl diphosphate contacts are provided by serine 231, serine 232, asparagine 233, and serine 276. The isopentenyl diphosphate site is built by serine 231, serine 232, asparagine 233, and serine 276.

Belongs to the IspH family. Requires [4Fe-4S] cluster as cofactor.

The enzyme catalyses isopentenyl diphosphate + 2 oxidized [2Fe-2S]-[ferredoxin] + H2O = (2E)-4-hydroxy-3-methylbut-2-enyl diphosphate + 2 reduced [2Fe-2S]-[ferredoxin] + 2 H(+). It catalyses the reaction dimethylallyl diphosphate + 2 oxidized [2Fe-2S]-[ferredoxin] + H2O = (2E)-4-hydroxy-3-methylbut-2-enyl diphosphate + 2 reduced [2Fe-2S]-[ferredoxin] + 2 H(+). It functions in the pathway isoprenoid biosynthesis; dimethylallyl diphosphate biosynthesis; dimethylallyl diphosphate from (2E)-4-hydroxy-3-methylbutenyl diphosphate: step 1/1. The protein operates within isoprenoid biosynthesis; isopentenyl diphosphate biosynthesis via DXP pathway; isopentenyl diphosphate from 1-deoxy-D-xylulose 5-phosphate: step 6/6. Functionally, catalyzes the conversion of 1-hydroxy-2-methyl-2-(E)-butenyl 4-diphosphate (HMBPP) into a mixture of isopentenyl diphosphate (IPP) and dimethylallyl diphosphate (DMAPP). Acts in the terminal step of the DOXP/MEP pathway for isoprenoid precursor biosynthesis. This chain is 4-hydroxy-3-methylbut-2-enyl diphosphate reductase 1, found in Bradyrhizobium diazoefficiens (strain JCM 10833 / BCRC 13528 / IAM 13628 / NBRC 14792 / USDA 110).